The primary structure comprises 728 residues: 1,4-alpha-glucan branching enzyme GlgB (728 aa).

The active-site Nucleophile is the aspartate 405. Glutamate 458 functions as the Proton donor in the catalytic mechanism.

It belongs to the glycosyl hydrolase 13 family. GlgB subfamily. Monomer.

The catalysed reaction is Transfers a segment of a (1-&gt;4)-alpha-D-glucan chain to a primary hydroxy group in a similar glucan chain.. The protein operates within glycan biosynthesis; glycogen biosynthesis. In terms of biological role, catalyzes the formation of the alpha-1,6-glucosidic linkages in glycogen by scission of a 1,4-alpha-linked oligosaccharide from growing alpha-1,4-glucan chains and the subsequent attachment of the oligosaccharide to the alpha-1,6 position. This chain is 1,4-alpha-glucan branching enzyme GlgB, found in Escherichia coli O6:K15:H31 (strain 536 / UPEC).